We begin with the raw amino-acid sequence, 129 residues long: Small ribosomal subunit protein uS11 (129 aa).

The protein belongs to the universal ribosomal protein uS11 family. Part of the 30S ribosomal subunit. Interacts with proteins S7 and S18. Binds to IF-3.

Its function is as follows. Located on the platform of the 30S subunit, it bridges several disparate RNA helices of the 16S rRNA. Forms part of the Shine-Dalgarno cleft in the 70S ribosome. This is Small ribosomal subunit protein uS11 from Bacillus anthracis (strain A0248).